Here is a 384-residue protein sequence, read N- to C-terminus: Acetylornithine aminotransferase (384 aa).

Pyridoxal 5'-phosphate contacts are provided by residues 95-96 (GA) and Phe-122. Arg-125 serves as a coordination point for N(2)-acetyl-L-ornithine. 207–210 (DEIQ) contacts pyridoxal 5'-phosphate. Lys-236 carries the post-translational modification N6-(pyridoxal phosphate)lysine. Ser-264 serves as a coordination point for N(2)-acetyl-L-ornithine. A pyridoxal 5'-phosphate-binding site is contributed by Thr-265.

This sequence belongs to the class-III pyridoxal-phosphate-dependent aminotransferase family. ArgD subfamily. In terms of assembly, homodimer. The cofactor is pyridoxal 5'-phosphate.

Its subcellular location is the cytoplasm. The catalysed reaction is N(2)-acetyl-L-ornithine + 2-oxoglutarate = N-acetyl-L-glutamate 5-semialdehyde + L-glutamate. The protein operates within amino-acid biosynthesis; L-arginine biosynthesis; N(2)-acetyl-L-ornithine from L-glutamate: step 4/4. The polypeptide is Acetylornithine aminotransferase (Halalkalibacterium halodurans (strain ATCC BAA-125 / DSM 18197 / FERM 7344 / JCM 9153 / C-125) (Bacillus halodurans)).